Reading from the N-terminus, the 456-residue chain is Non-structural protein V (456 aa).

The interval 53–92 (SGESEQVEGGMSKDDGDVERRNLEDLSSTSPTDGTIGKRV) is disordered. Basic and acidic residues predominate over residues 63-76 (MSKDDGDVERRNLE). Serine 257 carries the post-translational modification Phosphoserine; by host. Positions 265-324 (ISPEDEEPSSVGGKPNESIGRTIEGQSIRDNLQAKDNKSTDVPGAGPKDSAVKEEPPQKR) are disordered. Serine 350 is subject to Phosphoserine; by host. Histidine 408, cysteine 427, cysteine 431, cysteine 443, cysteine 445, cysteine 448, cysteine 452, and cysteine 455 together coordinate Zn(2+).

Belongs to the paramyxoviruses V protein family. As to quaternary structure, interacts with host IFIH1/MDA5, DHX58/LGP2, STAT1 and STAT2. Interacts (via N-terminus) with host UBXN1 (via C-terminal UBX domain); this interaction inhibits interferon-alpha/beta (IFN-alpha/beta) production. Interacts with host RIGI regulatory protein (via CARDs domain) and host TRIM25 (via SPRY domain); these interactions prevent TRIM25-mediated ubiquitination of RIG-I and disrupts downstream RIG-I signaling.

Its subcellular location is the host cytoplasm. In terms of biological role, plays an essential role in the inhibition of host immune response. Prevents the establishment of cellular antiviral state by blocking interferon-alpha/beta (IFN-alpha/beta) production and signaling pathway. Interacts with host IFIH1/MDA5 and DHX58/LGP2 to inhibit the transduction pathway involved in the activation of IFN-beta promoter, thus protecting the virus against cell antiviral state. Blocks the type I interferon signaling pathway by interacting with host STAT1 and STAT2 and thereby inhibiting their phosphorylation and subsequent nuclear translocation. Efficiently blocks the type II interferon signaling pathway. Suppresses interferon induction by interacting with and stabilizing host UBXN1, a negative regulator of both RIG-I-like receptors (RLR) and NF-kappa-B pathways. Blocks the type I interferon signaling pathway by disrupting the RIG-I signaling pathway. This Cynopterus brachyotis (Lesser short-nosed fruit bat) protein is Non-structural protein V (P/V/C).